Reading from the N-terminus, the 510-residue chain is Cytochrome P450 11B2, mitochondrial (510 aa).

Residues 1 to 34 (MGACDNDFIELHSRVTADVWLARPWQCLHRTRAL) constitute a mitochondrion transit peptide. F391 is a binding site for 21-hydroxyprogesterone. Heme is bound at residue C457.

Belongs to the cytochrome P450 family. It depends on heme as a cofactor. As to expression, adrenal cortex.

It is found in the mitochondrion inner membrane. It catalyses the reaction a steroid + 2 reduced [adrenodoxin] + O2 + 2 H(+) = an 11beta-hydroxysteroid + 2 oxidized [adrenodoxin] + H2O. The enzyme catalyses 21-hydroxyprogesterone + 2 reduced [adrenodoxin] + O2 + 2 H(+) = corticosterone + 2 oxidized [adrenodoxin] + H2O. The catalysed reaction is corticosterone + 2 reduced [adrenodoxin] + O2 + 2 H(+) = 18-hydroxycorticosterone + 2 oxidized [adrenodoxin] + H2O. It carries out the reaction 18-hydroxycorticosterone + 2 reduced [adrenodoxin] + O2 + 2 H(+) = aldosterone + 2 oxidized [adrenodoxin] + 2 H2O. It catalyses the reaction 11-deoxycortisol + 2 reduced [adrenodoxin] + O2 + 2 H(+) = cortisol + 2 oxidized [adrenodoxin] + H2O. The enzyme catalyses cortisol + 2 reduced [adrenodoxin] + O2 + 2 H(+) = 18-hydroxycortisol + 2 oxidized [adrenodoxin] + H2O. The catalysed reaction is 21-hydroxyprogesterone + 2 reduced [adrenodoxin] + O2 + 2 H(+) = 18-hydroxy-11-deoxycorticosterone + 2 oxidized [adrenodoxin] + H2O. It carries out the reaction 18-hydroxycortisol + 2 reduced [adrenodoxin] + O2 + 2 H(+) = 18-oxocortisol + 2 oxidized [adrenodoxin] + 2 H2O. It participates in steroid biosynthesis. In terms of biological role, a cytochrome P450 monooxygenase that catalyzes the biosynthesis of aldosterone, the main mineralocorticoid responsible for salt and water homeostasis. Catalyzes three sequential oxidative reactions of 11-deoxycorticosterone (21-hydroxyprogesterone), namely 11-beta hydroxylation, followed by two successive oxidations at C18 yielding 18-hydroxy and then 18-oxo intermediates (that do not leave the enzyme active site during the consecutive hydroxylation reactions), and end with the formation of aldosterone. Can also produce 18-hydroxycortisol and 18-oxocortisol, derived from successive oxidations of cortisol at C18, normally found at very low levels, but significantly increased in primary aldosteronism, the most common form of secondary hypertension. Mechanistically, uses molecular oxygen inserting one oxygen atom into a substrate and reducing the second into a water molecule. Two electrons are provided by NADPH via a two-protein mitochondrial transfer system comprising flavoprotein FDXR (adrenodoxin/ferredoxin reductase) and nonheme iron-sulfur protein FDX1 or FDX2 (adrenodoxin/ferredoxin). Could also be involved in the androgen metabolic pathway. This chain is Cytochrome P450 11B2, mitochondrial (Cyp11b2), found in Rattus norvegicus (Rat).